The chain runs to 755 residues: DNA ligase 1 (755 aa).

A mitochondrion-targeting transit peptide spans 1-44 (MRRLLTGCLLSSARPLKSRLPLLMSSSLPSSAGKKPKQATLARF). An N-acetylserine modification is found at arginine 2. The span at 47-60 (SMKNKPTEGTPSPK) shows a compositional bias: polar residues. 2 disordered regions span residues 47 to 79 (SMKN…GEEE) and 97 to 127 (PSSM…QRLV). Residues serine 58 and serine 75 each carry the phosphoserine modification. Residues 102-114 (SNFSSIPSSAPSS) are compositionally biased toward low complexity. A phosphoserine mark is found at serine 119 and serine 123. The segment at 309 to 318 (KLRIGLAEKT) is interaction with target DNA. Residue glutamate 417 coordinates ATP. Lysine 419 (N6-AMP-lysine intermediate) is an active-site residue. Residues arginine 424 and arginine 440 each contribute to the ATP site. Glutamate 472 serves as a coordination point for Mg(2+). Positions 493-495 (KRK) are interaction with target DNA. A Mg(2+)-binding site is contributed by glutamate 571. 3 residues coordinate ATP: lysine 576, arginine 590, and lysine 596.

Belongs to the ATP-dependent DNA ligase family. Mg(2+) is required as a cofactor.

Its subcellular location is the mitochondrion. It localises to the nucleus. The enzyme catalyses ATP + (deoxyribonucleotide)n-3'-hydroxyl + 5'-phospho-(deoxyribonucleotide)m = (deoxyribonucleotide)n+m + AMP + diphosphate.. Its function is as follows. DNA ligase that seals nicks in double-stranded DNA during DNA replication, DNA recombination and DNA repair. The mitochondrial form is required for mitochondrial DNA maintenance but is non-essential while the nuclear form is essential for cell viability. This Saccharomyces cerevisiae (strain ATCC 204508 / S288c) (Baker's yeast) protein is DNA ligase 1 (CDC9).